We begin with the raw amino-acid sequence, 251 residues long: Flap endonuclease Xni (251 aa).

Asp104 provides a ligand contact to Mg(2+). One can recognise a 5'-3' exonuclease domain in the interval 160–248 (VSPQQLSDYW…ALTGNLQQLR (89 aa)). K(+) contacts are provided by Leu171, Ala172, Pro180, Val182, and Ile185. Residues 184 to 189 (GIGPKT) form an interaction with DNA region.

The protein belongs to the Xni family. Mg(2+) is required as a cofactor. The cofactor is K(+).

Its function is as follows. Has flap endonuclease activity. During DNA replication, flap endonucleases cleave the 5'-overhanging flap structure that is generated by displacement synthesis when DNA polymerase encounters the 5'-end of a downstream Okazaki fragment. In Serratia proteamaculans (strain 568), this protein is Flap endonuclease Xni.